Consider the following 440-residue polypeptide: Thymidine phosphorylase (440 aa).

The protein belongs to the thymidine/pyrimidine-nucleoside phosphorylase family. Homodimer.

The catalysed reaction is thymidine + phosphate = 2-deoxy-alpha-D-ribose 1-phosphate + thymine. It participates in pyrimidine metabolism; dTMP biosynthesis via salvage pathway; dTMP from thymine: step 1/2. Functionally, the enzymes which catalyze the reversible phosphorolysis of pyrimidine nucleosides are involved in the degradation of these compounds and in their utilization as carbon and energy sources, or in the rescue of pyrimidine bases for nucleotide synthesis. The chain is Thymidine phosphorylase from Salmonella paratyphi A (strain ATCC 9150 / SARB42).